Reading from the N-terminus, the 244-residue chain is 7-cyano-7-deazaguanine synthase (244 aa).

An ATP-binding site is contributed by 14 to 24; it reads FSGGQDSATCV. 4 residues coordinate Zn(2+): Cys-202, Cys-217, Cys-220, and Cys-223.

The protein belongs to the QueC family. It depends on Zn(2+) as a cofactor.

The enzyme catalyses 7-carboxy-7-deazaguanine + NH4(+) + ATP = 7-cyano-7-deazaguanine + ADP + phosphate + H2O + H(+). It functions in the pathway purine metabolism; 7-cyano-7-deazaguanine biosynthesis. Functionally, catalyzes the ATP-dependent conversion of 7-carboxy-7-deazaguanine (CDG) to 7-cyano-7-deazaguanine (preQ(0)). The sequence is that of 7-cyano-7-deazaguanine synthase from Burkholderia ambifaria (strain MC40-6).